A 157-amino-acid chain; its full sequence is uncharacterized protein (157 aa).

Helical transmembrane passes span 29-49, 52-72, 93-113, and 117-137; these read LLII…PAYF, VLHV…GFGI, LGSV…RTWL, and NEMF…TITA.

The protein resides in the cell membrane. This is an uncharacterized protein from Bacillus subtilis (strain 168).